A 174-amino-acid chain; its full sequence is Ribosome maturation factor RimP (174 aa).

This sequence belongs to the RimP family.

The protein localises to the cytoplasm. Functionally, required for maturation of 30S ribosomal subunits. The sequence is that of Ribosome maturation factor RimP from Bdellovibrio bacteriovorus (strain ATCC 15356 / DSM 50701 / NCIMB 9529 / HD100).